A 62-amino-acid polypeptide reads, in one-letter code: Large ribosomal subunit protein bL28 (62 aa).

This sequence belongs to the bacterial ribosomal protein bL28 family.

This Desulforamulus reducens (strain ATCC BAA-1160 / DSM 100696 / MI-1) (Desulfotomaculum reducens) protein is Large ribosomal subunit protein bL28.